Reading from the N-terminus, the 234-residue chain is bZIP transcription factor 27 (234 aa).

A Nuclear localization signal motif is present at residues 152-159 (KKRGQDSD). The 51-residue stretch at 163 to 213 (GDRRYKRMIKNRESAARSRARKQAYTNELELEIAHLQTENARLKIQQEQLK) folds into the bZIP domain. A basic motif region spans residues 165-184 (RRYKRMIKNRESAARSRARK). The interval 191 to 212 (LELEIAHLQTENARLKIQQEQL) is leucine-zipper. The residue at position 231 (Thr231) is a Phosphothreonine.

Belongs to the bZIP family. Self-interacts. Interacts with FT and FD/BZIP14. Interacts with CPK33. Phosphorylated. As to expression, expressed on the flanks of the shoot apex.

The protein resides in the nucleus. Transcription factor required for the transition to flowering promoted by FT. The chain is bZIP transcription factor 27 from Arabidopsis thaliana (Mouse-ear cress).